The sequence spans 407 residues: Argininosuccinate synthase (407 aa).

ATP contacts are provided by residues 16-24 (AYSGGLDTS) and alanine 44. 2 residues coordinate L-citrulline: tyrosine 96 and serine 101. Position 126 (glycine 126) interacts with ATP. L-aspartate is bound by residues threonine 128, asparagine 132, and aspartate 133. Asparagine 132 is an L-citrulline binding site. 5 residues coordinate L-citrulline: arginine 136, serine 185, serine 194, glutamate 270, and tyrosine 282.

The protein belongs to the argininosuccinate synthase family. Type 1 subfamily. In terms of assembly, homotetramer.

The protein localises to the cytoplasm. It catalyses the reaction L-citrulline + L-aspartate + ATP = 2-(N(omega)-L-arginino)succinate + AMP + diphosphate + H(+). It functions in the pathway amino-acid biosynthesis; L-arginine biosynthesis; L-arginine from L-ornithine and carbamoyl phosphate: step 2/3. The chain is Argininosuccinate synthase from Shewanella sp. (strain W3-18-1).